The chain runs to 281 residues: Ribosomal RNA small subunit methyltransferase I (281 aa).

Belongs to the methyltransferase superfamily. RsmI family.

The protein localises to the cytoplasm. It carries out the reaction cytidine(1402) in 16S rRNA + S-adenosyl-L-methionine = 2'-O-methylcytidine(1402) in 16S rRNA + S-adenosyl-L-homocysteine + H(+). Its function is as follows. Catalyzes the 2'-O-methylation of the ribose of cytidine 1402 (C1402) in 16S rRNA. The sequence is that of Ribosomal RNA small subunit methyltransferase I from Pasteurella multocida (strain Pm70).